A 484-amino-acid polypeptide reads, in one-letter code: Protein nucleotidyltransferase YdiU (484 aa).

Positions 81, 83, 84, 103, 115, 116, 166, and 173 each coordinate ATP. Residue D244 is the Proton acceptor of the active site. N245 and D254 together coordinate Mg(2+). An ATP-binding site is contributed by D254.

Belongs to the SELO family. Mg(2+) is required as a cofactor. It depends on Mn(2+) as a cofactor.

The catalysed reaction is L-seryl-[protein] + ATP = 3-O-(5'-adenylyl)-L-seryl-[protein] + diphosphate. The enzyme catalyses L-threonyl-[protein] + ATP = 3-O-(5'-adenylyl)-L-threonyl-[protein] + diphosphate. It carries out the reaction L-tyrosyl-[protein] + ATP = O-(5'-adenylyl)-L-tyrosyl-[protein] + diphosphate. It catalyses the reaction L-histidyl-[protein] + UTP = N(tele)-(5'-uridylyl)-L-histidyl-[protein] + diphosphate. The catalysed reaction is L-seryl-[protein] + UTP = O-(5'-uridylyl)-L-seryl-[protein] + diphosphate. The enzyme catalyses L-tyrosyl-[protein] + UTP = O-(5'-uridylyl)-L-tyrosyl-[protein] + diphosphate. Nucleotidyltransferase involved in the post-translational modification of proteins. It can catalyze the addition of adenosine monophosphate (AMP) or uridine monophosphate (UMP) to a protein, resulting in modifications known as AMPylation and UMPylation. This chain is Protein nucleotidyltransferase YdiU, found in Shewanella sp. (strain MR-4).